Here is a 295-residue protein sequence, read N- to C-terminus: Hepatic leukemia factor (295 aa).

A compositionally biased stretch (basic and acidic residues) spans 36-52 (PEDAFSKEKDKGKKLDD). Disordered regions lie at residues 36–76 (PEDA…TLPY) and 92–149 (LSEN…SPIR). Residues 225–288 (DDKYWARRRK…GKCKNILAKY (64 aa)) enclose the bZIP domain. The segment at 227 to 247 (KYWARRRKNNMAAKRSRDARR) is basic motif. The leucine-zipper stretch occupies residues 248–255 (LKENQIAI).

This sequence belongs to the bZIP family. PAR subfamily. In terms of assembly, binds DNA specifically as homodimer or heterodimer with other PAR factors.

It localises to the nucleus. The chain is Hepatic leukemia factor (Hlf) from Mus musculus (Mouse).